The following is a 289-amino-acid chain: ATP phosphoribosyltransferase (289 aa).

This sequence belongs to the ATP phosphoribosyltransferase family. Long subfamily. Requires Mg(2+) as cofactor.

Its subcellular location is the cytoplasm. The catalysed reaction is 1-(5-phospho-beta-D-ribosyl)-ATP + diphosphate = 5-phospho-alpha-D-ribose 1-diphosphate + ATP. It functions in the pathway amino-acid biosynthesis; L-histidine biosynthesis; L-histidine from 5-phospho-alpha-D-ribose 1-diphosphate: step 1/9. Feedback inhibited by histidine. Catalyzes the condensation of ATP and 5-phosphoribose 1-diphosphate to form N'-(5'-phosphoribosyl)-ATP (PR-ATP). Has a crucial role in the pathway because the rate of histidine biosynthesis seems to be controlled primarily by regulation of HisG enzymatic activity. The protein is ATP phosphoribosyltransferase of Desulforudis audaxviator (strain MP104C).